We begin with the raw amino-acid sequence, 90 residues long: Probable Fe(2+)-trafficking protein (90 aa).

This sequence belongs to the Fe(2+)-trafficking protein family.

In terms of biological role, could be a mediator in iron transactions between iron acquisition and iron-requiring processes, such as synthesis and/or repair of Fe-S clusters in biosynthetic enzymes. The protein is Probable Fe(2+)-trafficking protein of Thioalkalivibrio sulfidiphilus (strain HL-EbGR7).